Consider the following 102-residue polypeptide: MAKGQSLQDPFLNALRRERVPVSIYLVNGIKLQGQIESFDQFVILLKNTVSQMVYKHAISTVVPSRPVSHHSNNAGGGTSSNYHHGSSAQNTSAQQDSEETE.

Residues 9-68 (DPFLNALRRERVPVSIYLVNGIKLQGQIESFDQFVILLKNTVSQMVYKHAISTVVPSRPV) form the Sm domain. The interval 63 to 102 (VPSRPVSHHSNNAGGGTSSNYHHGSSAQNTSAQQDSEETE) is disordered. Residues 70–96 (HHSNNAGGGTSSNYHHGSSAQNTSAQQ) show a composition bias toward polar residues.

This sequence belongs to the Hfq family. In terms of assembly, homohexamer.

Functionally, RNA chaperone that binds small regulatory RNA (sRNAs) and mRNAs to facilitate mRNA translational regulation in response to envelope stress, environmental stress and changes in metabolite concentrations. Also binds with high specificity to tRNAs. In Escherichia fergusonii (strain ATCC 35469 / DSM 13698 / CCUG 18766 / IAM 14443 / JCM 21226 / LMG 7866 / NBRC 102419 / NCTC 12128 / CDC 0568-73), this protein is RNA-binding protein Hfq.